A 787-amino-acid chain; its full sequence is Protein translocase subunit SecA (787 aa).

ATP-binding positions include glutamine 85, 103 to 107, and aspartate 492; that span reads GEGKT.

The protein belongs to the SecA family. In terms of assembly, monomer and homodimer. Part of the essential Sec protein translocation apparatus which comprises SecA, SecYEG and auxiliary proteins SecDF. Other proteins may also be involved.

It localises to the cell membrane. The protein resides in the cytoplasm. The enzyme catalyses ATP + H2O + cellular proteinSide 1 = ADP + phosphate + cellular proteinSide 2.. Its function is as follows. Part of the Sec protein translocase complex. Interacts with the SecYEG preprotein conducting channel. Has a central role in coupling the hydrolysis of ATP to the transfer of proteins into and across the cell membrane, serving as an ATP-driven molecular motor driving the stepwise translocation of polypeptide chains across the membrane. The polypeptide is Protein translocase subunit SecA (Limosilactobacillus reuteri (strain DSM 20016) (Lactobacillus reuteri)).